The chain runs to 299 residues: Probable 3-hydroxyisobutyrate dehydrogenase-like 2, mitochondrial (299 aa).

NAD(+)-binding positions include 14–43 (TRIGWIGIGIMGSAMVSHILAAGYSVTVYA) and S108. K182 is a catalytic residue. K250 contributes to the NAD(+) binding site.

It belongs to the HIBADH-related family. 3-hydroxyisobutyrate dehydrogenase subfamily.

It is found in the mitochondrion. The catalysed reaction is 3-hydroxy-2-methylpropanoate + NAD(+) = 2-methyl-3-oxopropanoate + NADH + H(+). The protein operates within amino-acid degradation; L-valine degradation. This Arabidopsis thaliana (Mouse-ear cress) protein is Probable 3-hydroxyisobutyrate dehydrogenase-like 2, mitochondrial.